A 226-amino-acid polypeptide reads, in one-letter code: Gap junction beta-2 protein (226 aa).

An intramembrane segment occupies 2–13; that stretch reads DWSALQTILGGV. Residues 14–20 are Cytoplasmic-facing; sequence NKHSTSI. Residues 21–40 traverse the membrane as a helical segment; the sequence is GKIWLTVLFIFRIMILVVAA. Topologically, residues 41–73 are extracellular; the sequence is KEVWGDEQADFVCNTLQPGCKNVCYDHYFPISH. Residues Glu-42, Gly-45, and Glu-47 each coordinate Ca(2+). 3 cysteine pairs are disulfide-bonded: Cys-53–Cys-180, Cys-60–Cys-174, and Cys-64–Cys-169. The helical transmembrane segment at 74–94 threads the bilayer; it reads IRLWALQLIFVSTPALLVAMH. Residues 95 to 135 lie on the Cytoplasmic side of the membrane; sequence VAYYRHEKKRKFIRGEIKTEFKDIEEIKNQKVRIEGSLWWT. Residues 136–156 traverse the membrane as a helical segment; it reads YTGSIFFRVIFEAAFMYVFYV. The Extracellular segment spans residues 157-189; sequence MYDGFAMQRLVKCNAWPCPNTVDCFVSRPTEKT. The helical transmembrane segment at 190–210 threads the bilayer; sequence VFTVFMIAVSGICILLNVTEL. The Cytoplasmic portion of the chain corresponds to 211 to 226; sequence CYLLIRFCSGKSKKPV.

It belongs to the connexin family. Beta-type (group I) subfamily. A hemichannel or connexon is composed of a hexamer of connexins. A functional gap junction is formed by the apposition of two hemichannels. Forms heteromeric channels with GJB4. Interacts with CNST.

The protein resides in the cell membrane. It localises to the cell junction. The protein localises to the gap junction. Its function is as follows. Structural component of gap junctions. Gap junctions are dodecameric channels that connect the cytoplasm of adjoining cells. They are formed by the docking of two hexameric hemichannels, one from each cell membrane. Small molecules and ions diffuse from one cell to a neighboring cell via the central pore. The chain is Gap junction beta-2 protein (GJB2) from Ovis aries (Sheep).